Consider the following 388-residue polypeptide: Staphopain A (388 aa).

Residues 1 to 25 form the signal peptide; it reads MKRNFPKLIALSLIFSLSITPIANA. A propeptide spanning residues 26–214 is cleaved from the precursor; the sequence is ESNSNIKAKD…TSQFKSNNYT (189 aa). Residues cysteine 238, histidine 334, and asparagine 355 contribute to the active site.

The protein belongs to the peptidase C47 family. In the cytoplasm, prematurely activated/folded ScpA forms a stable non-covalent complex with ScpB. Post-translationally, cleavage leads to the activation of ScpA probably by an auto-catalytic manner.

The protein localises to the secreted. It catalyses the reaction Broad endopeptidase action on proteins including elastin, but rather limited hydrolysis of small-molecule substrates. Assays are conveniently made with hemoglobin, casein or Z-Phe-Arg-NHMec as substrate.. Prematurely activated/folded staphopain A is inhibited by staphostatin A (ScpB), which is probably required to protect staphylococcal cytoplasmic proteins from degradation by ScpA. In terms of biological role, cysteine protease that plays an important role in the inhibition of host innate immune response. Cleaves host elastins found in connective tissues, pulmonary surfactant protein A in the lungs, and the chemokine receptor CXCR2 on leukocytes. Proteolytic cleavage of surfactant protein A impairs bacterial phagocytosis by neutrophils while CXCR2 degradation blocks neutrophil activation and chemotaxis. Additionally, promotes vascular leakage by activating the plasma kallikerin/kinin system, resulting in hypotension. In Staphylococcus aureus (strain MRSA252), this protein is Staphopain A (sspP).